A 180-amino-acid polypeptide reads, in one-letter code: Segregation and condensation protein B (180 aa).

The protein belongs to the ScpB family. As to quaternary structure, homodimer. Homodimerization may be required to stabilize the binding of ScpA to the Smc head domains. Component of a cohesin-like complex composed of ScpA, ScpB and the Smc homodimer, in which ScpA and ScpB bind to the head domain of Smc. The presence of the three proteins is required for the association of the complex with DNA.

It localises to the cytoplasm. Functionally, participates in chromosomal partition during cell division. May act via the formation of a condensin-like complex containing Smc and ScpA that pull DNA away from mid-cell into both cell halves. The polypeptide is Segregation and condensation protein B (Staphylococcus epidermidis (strain ATCC 35984 / DSM 28319 / BCRC 17069 / CCUG 31568 / BM 3577 / RP62A)).